The primary structure comprises 957 residues: Valine--tRNA ligase (957 aa).

A 'HIGH' region motif is present at residues 45–55 (PNVTGSLHMGH). The 'KMSKS' region motif lies at 571 to 575 (KMSKS). Position 574 (K574) interacts with ATP. Residues 887 to 946 (VVDFAAEQARLEKELGKAEADIKRAEAKLANEKFVANAAEEVVEEEREKREAAVARKVKI) are a coiled coil.

The protein belongs to the class-I aminoacyl-tRNA synthetase family. ValS type 1 subfamily. In terms of assembly, monomer.

Its subcellular location is the cytoplasm. The catalysed reaction is tRNA(Val) + L-valine + ATP = L-valyl-tRNA(Val) + AMP + diphosphate. Functionally, catalyzes the attachment of valine to tRNA(Val). As ValRS can inadvertently accommodate and process structurally similar amino acids such as threonine, to avoid such errors, it has a 'posttransfer' editing activity that hydrolyzes mischarged Thr-tRNA(Val) in a tRNA-dependent manner. The protein is Valine--tRNA ligase of Rhodopseudomonas palustris (strain ATCC BAA-98 / CGA009).